Consider the following 243-residue polypeptide: HTH-type quorum sensing-dependent transcriptional regulator RpaR (243 aa).

The HTH luxR-type domain occupies 174–239; it reads KPIRRNRLTP…AAVAKALTLG (66 aa). Positions 198–217 form a DNA-binding region, H-T-H motif; it reads AWEISVILCITERTVKFHLI.

It belongs to the autoinducer-regulated transcriptional regulatory protein family.

Its function is as follows. Responds to the quorum-sensing autoinducer 4-coumaroyl-homoserine lactone to regulate expression of several genes. Represses expression of rpaI in the absence of the inducer. In Rhodopseudomonas palustris (strain ATCC BAA-98 / CGA009), this protein is HTH-type quorum sensing-dependent transcriptional regulator RpaR.